The following is a 615-amino-acid chain: Integral inner nuclear membrane protein ima1 (615 aa).

Helical transmembrane passes span 192–212, 247–267, and 323–343; these read FVLW…SIVW, IFYF…WYKM, and QIHA…ISCL. The tract at residues 357–387 is disordered; the sequence is ILKPRKKRQESTSSVHRIGKESSDRKDGISG. Residues 374–384 are compositionally biased toward basic and acidic residues; it reads IGKESSDRKDG. 2 consecutive transmembrane segments (helical) span residues 563 to 583 and 586 to 606; these read AKLL…GWRL and FTMF…VMKH.

The protein localises to the nucleus inner membrane. Inner nuclear membrane protein that specifically binds to heterochromatic regions and promotes the tethering of centromeric DNA to the SUN-KASH complex. Couples centromeres to the nuclear envelope, thus contributing to their association with the microtubule organizing center attachment site and to the positioning of the nucleus at the cell center by microtubules. The protein is Integral inner nuclear membrane protein ima1 (IMA1) of Schizosaccharomyces pombe (strain 972 / ATCC 24843) (Fission yeast).